The chain runs to 64 residues: Prokaryotic ubiquitin-like protein Pup (64 aa).

Over residues 1 to 11 (MAQEQTKRTGG) the composition is skewed to basic and acidic residues. Residues 1–37 (MAQEQTKRTGGGDEDDTPGADGAAGQERREKLAEDTD) are disordered. The interval 21-58 (DGAAGQERREKLAEDTDDLLDEIDDVLEENAEDFVRAY) is ARC ATPase binding. Residues 24–52 (AGQERREKLAEDTDDLLDEIDDVLEENAE) adopt a coiled-coil conformation. Gln-64 carries the deamidated glutamine modification. Gln-64 participates in a covalent cross-link: Isoglutamyl lysine isopeptide (Gln-Lys) (interchain with K-? in acceptor proteins).

It belongs to the prokaryotic ubiquitin-like protein family. In terms of assembly, strongly interacts with the proteasome-associated ATPase ARC through a hydrophobic interface; the interacting region of Pup lies in its C-terminal half. There is one Pup binding site per ARC hexamer ring. Is modified by deamidation of its C-terminal glutamine to glutamate by the deamidase Dop, a prerequisite to the subsequent pupylation process.

The protein operates within protein degradation; proteasomal Pup-dependent pathway. In terms of biological role, protein modifier that is covalently attached to lysine residues of substrate proteins, thereby targeting them for proteasomal degradation. The tagging system is termed pupylation. This is Prokaryotic ubiquitin-like protein Pup from Rhodococcus jostii (strain RHA1).